We begin with the raw amino-acid sequence, 523 residues long: Putative glycerol-3-phosphate transporter 1 (523 aa).

12 helical membrane passes run 29 to 49, 102 to 122, 133 to 153, 163 to 183, 196 to 216, 228 to 248, 306 to 326, 344 to 364, 368 to 388, 402 to 422, 444 to 464, and 468 to 488; these read LSYSAYQAIVLIVTFLAYASY, VLLGEIDVAFLAVYAFGMYFA, IFLTVGMIGTGLFTSLFGVGY, FLIMQMLAGLFQSSGWPSVVA, LIMGIWNAHTSVGNITGSLIA, FVVPGVIIVVIGLVNYAFLPV, FALCLFFAKLVAYTFLYWLPF, GNLSTMFDVGGVVGGIMAGYI, IGARAITAASFMYCSIPALFF, SLMFLTGMLVNGPYALITTAV, AIIDGTGSVGAAVGPLLTGYI, and GSWTAVFTMLMGAAFVAGLLL.

It belongs to the major facilitator superfamily. Organophosphate:Pi antiporter (OPA) (TC 2.A.1.4) family.

The protein localises to the membrane. The sequence is that of Putative glycerol-3-phosphate transporter 1 from Arabidopsis thaliana (Mouse-ear cress).